The primary structure comprises 242 residues: Triosephosphate isomerase (242 aa).

9-11 (NWK) contributes to the substrate binding site. H90 functions as the Electrophile in the catalytic mechanism. E162 serves as the catalytic Proton acceptor. Substrate-binding positions include G168, S205, and 226–227 (GG).

It belongs to the triosephosphate isomerase family. As to quaternary structure, homodimer.

The protein resides in the cytoplasm. The enzyme catalyses D-glyceraldehyde 3-phosphate = dihydroxyacetone phosphate. The protein operates within carbohydrate biosynthesis; gluconeogenesis. It participates in carbohydrate degradation; glycolysis; D-glyceraldehyde 3-phosphate from glycerone phosphate: step 1/1. Functionally, involved in the gluconeogenesis. Catalyzes stereospecifically the conversion of dihydroxyacetone phosphate (DHAP) to D-glyceraldehyde-3-phosphate (G3P). This chain is Triosephosphate isomerase, found in Azoarcus sp. (strain BH72).